Here is a 169-residue protein sequence, read N- to C-terminus: MRAFIVGRFQPFHNGHMEILKRILHENDSVIIGIGSAQFSHTLKDPFTAGERHLMISSALEESGVYNYYLVPIEDVNSNPLWVSHVESLTPPFQRVYTNNPLVKRLFYEKGYEVLSMDLLNRKEWSGTSIRNKMIRGENWKKDVPPAVARVIDEIDGVSRIRDLSESDE.

The protein belongs to the archaeal NMN adenylyltransferase family.

The protein localises to the cytoplasm. The enzyme catalyses beta-nicotinamide D-ribonucleotide + ATP + H(+) = diphosphate + NAD(+). It functions in the pathway cofactor biosynthesis; NAD(+) biosynthesis; NAD(+) from nicotinamide D-ribonucleotide: step 1/1. In Picrophilus torridus (strain ATCC 700027 / DSM 9790 / JCM 10055 / NBRC 100828 / KAW 2/3), this protein is Nicotinamide-nucleotide adenylyltransferase.